The primary structure comprises 481 residues: Matrilin-3 (481 aa).

A signal peptide spans 1 to 27 (MLLSAPLRHLPGLLLLLWPLLLLPSLA). One can recognise a VWFA domain in the interval 78–253 (DLVFIIDSSR…GVIEKLSARF (176 aa)). Arg-193 bears the Omega-N-methylarginine mark. EGF-like domains are found at residues 259 to 300 (ALDQ…KTCS), 301 to 342 (AIDK…RTCA), 343 to 384 (ALDK…KTCS), and 385 to 426 (VRNK…KTCS). 12 cysteine pairs are disulfide-bonded: Cys-263/Cys-274, Cys-270/Cys-284, Cys-286/Cys-299, Cys-305/Cys-316, Cys-312/Cys-326, Cys-328/Cys-341, Cys-347/Cys-358, Cys-354/Cys-368, Cys-370/Cys-383, Cys-389/Cys-400, Cys-396/Cys-410, and Cys-412/Cys-425. N-linked (GlcNAc...) asparagine glycosylation is present at Asn-321. Residue Ser-436 is modified to Phosphoserine; by FAM20C. Residues 451 to 475 (EKVSSHLQKLNTKLDNILKKLKVTE) are a coiled coil.

As to quaternary structure, can form homooligomers (monomers, dimers, trimers and tetramers) and heterooligomers with matrilin-1. Interacts with COMP. Component of a complex containing at least CRELD2, MANF, MATN3 and PDIA4. In terms of tissue distribution, strongly expressed in growing skeletal tissue such as epiphyseal growth plate or in bone undergoing growth and remodeling. In the bone, actively synthesized in osteoblasts and osteocytes. Expressed in cartilage of sternum, femur, vertebrae, trachea, articular and epiphyseal cartilage, cartilage of developing bones and bones.

Its subcellular location is the secreted. Functionally, major component of the extracellular matrix of cartilage and may play a role in the formation of extracellular filamentous networks. In Mus musculus (Mouse), this protein is Matrilin-3 (Matn3).